A 619-amino-acid polypeptide reads, in one-letter code: 2-succinyl-5-enolpyruvyl-6-hydroxy-3-cyclohexene-1-carboxylate synthase (619 aa).

Residues Ser385–Ser398 are compositionally biased toward polar residues. A disordered region spans residues Ser385 to Ser415. Over residues Ser399 to Asn413 the composition is skewed to acidic residues.

Belongs to the TPP enzyme family. MenD subfamily. In terms of assembly, homodimer. Mg(2+) is required as a cofactor. It depends on Mn(2+) as a cofactor. The cofactor is thiamine diphosphate.

It carries out the reaction isochorismate + 2-oxoglutarate + H(+) = 5-enolpyruvoyl-6-hydroxy-2-succinyl-cyclohex-3-ene-1-carboxylate + CO2. It participates in quinol/quinone metabolism; 1,4-dihydroxy-2-naphthoate biosynthesis; 1,4-dihydroxy-2-naphthoate from chorismate: step 2/7. The protein operates within quinol/quinone metabolism; menaquinone biosynthesis. In terms of biological role, catalyzes the thiamine diphosphate-dependent decarboxylation of 2-oxoglutarate and the subsequent addition of the resulting succinic semialdehyde-thiamine pyrophosphate anion to isochorismate to yield 2-succinyl-5-enolpyruvyl-6-hydroxy-3-cyclohexene-1-carboxylate (SEPHCHC). This is 2-succinyl-5-enolpyruvyl-6-hydroxy-3-cyclohexene-1-carboxylate synthase from Haloquadratum walsbyi (strain DSM 16790 / HBSQ001).